We begin with the raw amino-acid sequence, 86 residues long: UPF0512 protein V (86 aa).

Belongs to the UPF0512 family.

The polypeptide is UPF0512 protein V (Dictyostelium discoideum (Social amoeba)).